Consider the following 93-residue polypeptide: Ferredoxin-2 (93 aa).

The 2Fe-2S ferredoxin-type domain occupies Tyr2–Asp91. [2Fe-2S] cluster contacts are provided by Cys37, Cys42, Cys45, and Cys75.

It belongs to the 2Fe2S plant-type ferredoxin family. [2Fe-2S] cluster serves as cofactor.

The protein resides in the plastid. It localises to the chloroplast. In terms of biological role, ferredoxins are iron-sulfur proteins that transfer electrons in a wide variety of metabolic reactions. The chain is Ferredoxin-2 from Equisetum telmateia (Great horsetail).